A 310-amino-acid polypeptide reads, in one-letter code: 4-hydroxyproline 2-epimerase (310 aa).

The Proton acceptor role is filled by cysteine 88. Substrate is bound by residues 89–90 (GH), histidine 208, and aspartate 232. The Proton donor role is filled by cysteine 236. 237–238 (GT) contributes to the substrate binding site.

Belongs to the proline racemase family.

The enzyme catalyses trans-4-hydroxy-L-proline = cis-4-hydroxy-D-proline. Catalyzes the epimerization of trans-4-hydroxy-L-proline (t4LHyp) to cis-4-hydroxy-D-proline (c4DHyp). Is likely involved in a degradation pathway that converts t4LHyp to alpha-ketoglutarate. Displays no proline racemase activity. The polypeptide is 4-hydroxyproline 2-epimerase (Burkholderia cenocepacia (strain ATCC BAA-245 / DSM 16553 / LMG 16656 / NCTC 13227 / J2315 / CF5610) (Burkholderia cepacia (strain J2315))).